A 431-amino-acid chain; its full sequence is Enolase (431 aa).

Gln166 is a binding site for (2R)-2-phosphoglycerate. Glu208 serves as the catalytic Proton donor. Mg(2+)-binding residues include Asp245, Glu288, and Asp315. (2R)-2-phosphoglycerate-binding residues include Lys340, Arg369, Ser370, and Lys391. The Proton acceptor role is filled by Lys340.

This sequence belongs to the enolase family. Mg(2+) serves as cofactor.

Its subcellular location is the cytoplasm. The protein localises to the secreted. It is found in the cell surface. It carries out the reaction (2R)-2-phosphoglycerate = phosphoenolpyruvate + H2O. It functions in the pathway carbohydrate degradation; glycolysis; pyruvate from D-glyceraldehyde 3-phosphate: step 4/5. Functionally, catalyzes the reversible conversion of 2-phosphoglycerate (2-PG) into phosphoenolpyruvate (PEP). It is essential for the degradation of carbohydrates via glycolysis. The chain is Enolase from Clostridium perfringens (strain ATCC 13124 / DSM 756 / JCM 1290 / NCIMB 6125 / NCTC 8237 / Type A).